Reading from the N-terminus, the 440-residue chain is MFLAQEIIRKKRDGHALSDEEIRFFINGIRDNTISEGQIAALAMTIFFHDMTMPERVSLTMAMRDSGTVLDWKSLNLNGPIVDKHSTGGVGDVTSLMLGPMVAACGGYVPMISGRGLGHTGGTLDKLEAIPGFDIFPDDNRFREIIQDVGVAIIGQTSSLAPADKRFYATRDITATVDSIPLITGSILAKKLAEGLDALVMDVKVGSGAFMPTYELSEALAEAIVGVANGAGVRTTALLTDMNQVLASSAGNAVEVREAVQFLTGEYRNPRLFDVTMALCVEMLISGQLAKDDAEARAKLQAVLDNGKAAEVFGRMVAAQKGPSDFVENYDKYLPTAMLSKAVYADTEGFISAMDTRALGMAVVSMGGGRRQASDTIDYSVGFTDMARLGDSIDGQRPLAVIHAKDETSWQEAAKAVKAAIILDDKAPASTPSVYRRITE.

Belongs to the thymidine/pyrimidine-nucleoside phosphorylase family. Homodimer.

The catalysed reaction is thymidine + phosphate = 2-deoxy-alpha-D-ribose 1-phosphate + thymine. The protein operates within pyrimidine metabolism; dTMP biosynthesis via salvage pathway; dTMP from thymine: step 1/2. In terms of biological role, the enzymes which catalyze the reversible phosphorolysis of pyrimidine nucleosides are involved in the degradation of these compounds and in their utilization as carbon and energy sources, or in the rescue of pyrimidine bases for nucleotide synthesis. This chain is Thymidine phosphorylase, found in Salmonella agona (strain SL483).